Reading from the N-terminus, the 585-residue chain is Pyruvate kinase (585 aa).

Arg32 serves as a coordination point for substrate. K(+) is bound by residues Asn34, Ser36, Asp66, and Thr67. 34–37 (NFSH) contributes to the ATP binding site. 2 residues coordinate ATP: Arg73 and Lys156. A Mg(2+)-binding site is contributed by Glu221. Gly244, Asp245, and Thr277 together coordinate substrate. Asp245 provides a ligand contact to Mg(2+).

The protein belongs to the pyruvate kinase family. This sequence in the C-terminal section; belongs to the PEP-utilizing enzyme family. It depends on Mg(2+) as a cofactor. Requires K(+) as cofactor.

The enzyme catalyses pyruvate + ATP = phosphoenolpyruvate + ADP + H(+). Its pathway is carbohydrate degradation; glycolysis; pyruvate from D-glyceraldehyde 3-phosphate: step 5/5. The sequence is that of Pyruvate kinase (pyk) from Staphylococcus epidermidis (strain ATCC 35984 / DSM 28319 / BCRC 17069 / CCUG 31568 / BM 3577 / RP62A).